The following is a 269-amino-acid chain: Formamidopyrimidine-DNA glycosylase (269 aa).

The Schiff-base intermediate with DNA role is filled by Pro-2. Catalysis depends on Glu-3, which acts as the Proton donor. The Proton donor; for beta-elimination activity role is filled by Lys-57. DNA is bound by residues His-90, Arg-109, and Lys-150. The segment at 235-269 (QVYGRKGEPCRVCGTPIVATKHAQRATFYCRHCQK) adopts an FPG-type zinc-finger fold. The active-site Proton donor; for delta-elimination activity is Arg-259.

It belongs to the FPG family. Monomer. Zn(2+) is required as a cofactor.

The catalysed reaction is Hydrolysis of DNA containing ring-opened 7-methylguanine residues, releasing 2,6-diamino-4-hydroxy-5-(N-methyl)formamidopyrimidine.. It catalyses the reaction 2'-deoxyribonucleotide-(2'-deoxyribose 5'-phosphate)-2'-deoxyribonucleotide-DNA = a 3'-end 2'-deoxyribonucleotide-(2,3-dehydro-2,3-deoxyribose 5'-phosphate)-DNA + a 5'-end 5'-phospho-2'-deoxyribonucleoside-DNA + H(+). Its function is as follows. Involved in base excision repair of DNA damaged by oxidation or by mutagenic agents. Acts as a DNA glycosylase that recognizes and removes damaged bases. Has a preference for oxidized purines, such as 7,8-dihydro-8-oxoguanine (8-oxoG). Has AP (apurinic/apyrimidinic) lyase activity and introduces nicks in the DNA strand. Cleaves the DNA backbone by beta-delta elimination to generate a single-strand break at the site of the removed base with both 3'- and 5'-phosphates. This chain is Formamidopyrimidine-DNA glycosylase, found in Salmonella newport (strain SL254).